The primary structure comprises 289 residues: Phosphatidylglycerol--prolipoprotein diacylglyceryl transferase (289 aa).

7 helical membrane-spanning segments follow: residues 17–37, 57–77, 89–109, 121–141, 174–194, 200–220, and 235–255; these read LAVR…ILLG, MLFY…IFFY, IFAV…VIAA, WLVV…AGRI, QLYE…IYSA, GAVS…AEFF, and ISMG…MLVW. Arg140 is a binding site for a 1,2-diacyl-sn-glycero-3-phospho-(1'-sn-glycerol).

The protein belongs to the Lgt family.

The protein localises to the cell inner membrane. The catalysed reaction is L-cysteinyl-[prolipoprotein] + a 1,2-diacyl-sn-glycero-3-phospho-(1'-sn-glycerol) = an S-1,2-diacyl-sn-glyceryl-L-cysteinyl-[prolipoprotein] + sn-glycerol 1-phosphate + H(+). The protein operates within protein modification; lipoprotein biosynthesis (diacylglyceryl transfer). In terms of biological role, catalyzes the transfer of the diacylglyceryl group from phosphatidylglycerol to the sulfhydryl group of the N-terminal cysteine of a prolipoprotein, the first step in the formation of mature lipoproteins. The protein is Phosphatidylglycerol--prolipoprotein diacylglyceryl transferase of Nitrosospira multiformis (strain ATCC 25196 / NCIMB 11849 / C 71).